A 518-amino-acid chain; its full sequence is Serine--tRNA ligase, mitochondrial (518 aa).

Residues 1–34 (MAASMARLWWPFLARQGLRSRGRCVCSQNPRRSF) constitute a mitochondrion transit peptide. The residue at position 110 (Lys110) is an N6-acetyllysine. The residue at position 195 (Lys195) is an N6-succinyllysine. 299–301 (TAE) contacts L-serine. 330 to 332 (RAE) serves as a coordination point for ATP. Lys337 is subject to N6-succinyllysine. An ATP-binding site is contributed by Val345. Residue Glu352 participates in L-serine binding. Residue 418 to 421 (EVTS) coordinates ATP. Residue Thr453 coordinates L-serine. The segment at 497 to 518 (PLQYIGPNQPQKPRLPGQSATR) is disordered.

The protein belongs to the class-II aminoacyl-tRNA synthetase family. Type-1 seryl-tRNA synthetase subfamily. Homodimer. The tRNA molecule probably binds across the dimer. Ubiquitous.

The protein localises to the mitochondrion matrix. It carries out the reaction tRNA(Ser) + L-serine + ATP = L-seryl-tRNA(Ser) + AMP + diphosphate + H(+). The enzyme catalyses tRNA(Sec) + L-serine + ATP = L-seryl-tRNA(Sec) + AMP + diphosphate + H(+). Its pathway is aminoacyl-tRNA biosynthesis; selenocysteinyl-tRNA(Sec) biosynthesis; L-seryl-tRNA(Sec) from L-serine and tRNA(Sec): step 1/1. In terms of biological role, catalyzes the attachment of serine to tRNA(Ser). Is also probably able to aminoacylate tRNA(Sec) with serine, to form the misacylated tRNA L-seryl-tRNA(Sec), which will be further converted into selenocysteinyl-tRNA(Sec). The polypeptide is Serine--tRNA ligase, mitochondrial (Sars2) (Mus musculus (Mouse)).